Here is a 408-residue protein sequence, read N- to C-terminus: Imidazolonepropionase (408 aa).

Fe(3+) is bound by residues His-73 and His-75. Positions 73 and 75 each coordinate Zn(2+). 3 residues coordinate 4-imidazolone-5-propanoate: Arg-82, Tyr-145, and His-178. Tyr-145 contacts N-formimidoyl-L-glutamate. Fe(3+) is bound at residue His-243. Residue His-243 coordinates Zn(2+). Gln-246 serves as a coordination point for 4-imidazolone-5-propanoate. Asp-318 is a binding site for Fe(3+). Zn(2+) is bound at residue Asp-318. N-formimidoyl-L-glutamate contacts are provided by Asn-320 and Gly-322. Ser-323 is a 4-imidazolone-5-propanoate binding site.

It belongs to the metallo-dependent hydrolases superfamily. HutI family. Requires Zn(2+) as cofactor. The cofactor is Fe(3+).

The protein resides in the cytoplasm. It carries out the reaction 4-imidazolone-5-propanoate + H2O = N-formimidoyl-L-glutamate. The protein operates within amino-acid degradation; L-histidine degradation into L-glutamate; N-formimidoyl-L-glutamate from L-histidine: step 3/3. Functionally, catalyzes the hydrolytic cleavage of the carbon-nitrogen bond in imidazolone-5-propanoate to yield N-formimidoyl-L-glutamate. It is the third step in the universal histidine degradation pathway. The sequence is that of Imidazolonepropionase from Shewanella loihica (strain ATCC BAA-1088 / PV-4).